A 102-amino-acid polypeptide reads, in one-letter code: Phosphoribosyl-ATP pyrophosphatase (102 aa).

It belongs to the PRA-PH family.

The protein resides in the cytoplasm. It carries out the reaction 1-(5-phospho-beta-D-ribosyl)-ATP + H2O = 1-(5-phospho-beta-D-ribosyl)-5'-AMP + diphosphate + H(+). The protein operates within amino-acid biosynthesis; L-histidine biosynthesis; L-histidine from 5-phospho-alpha-D-ribose 1-diphosphate: step 2/9. This Dinoroseobacter shibae (strain DSM 16493 / NCIMB 14021 / DFL 12) protein is Phosphoribosyl-ATP pyrophosphatase.